The following is a 636-amino-acid chain: Polyglycine hydrolase (636 aa).

Positions 1-22 (MHSLSLRRLLTSVLSLCSCSSA) are cleaved as a signal peptide. N-linked (GlcNAc...) asparagine glycosylation is found at Asn-30 and Asn-151. Residues Cys-141 and Cys-175 are joined by a disulfide bond. Ser-363 is a catalytic residue. Residues Asn-383 and Asn-481 are each glycosylated (N-linked (GlcNAc...) asparagine). Positions 512–540 (TEDRIVQESKNTGQDPVHPQSAKLVPGPH) are disordered.

It belongs to the peptidase S12 family.

Its subcellular location is the secreted. It carries out the reaction a glycyl-glycyl-[protein] + H2O = N-terminal glycyl-[protein] + [protein]-C-terminal glycine. Its function is as follows. Serine-type endopeptidase that cleaves Gly-Gly bonds in the polyglycine linker of host plant class IV chitinases to disrupt their chitin-binding, and thereby plays a role in lowering the defense responses of the host to the fungus. Degrades Z.mays Endochitinase A (CHIA) in vitro, although corn is not its host species. This is Polyglycine hydrolase from Fusarium vanettenii (strain ATCC MYA-4622 / CBS 123669 / FGSC 9596 / NRRL 45880 / 77-13-4) (Fusarium solani subsp. pisi).